Reading from the N-terminus, the 744-residue chain is Dolasta-1(15),8-diene synthase (744 aa).

The segment at 1–344 (MASTMMNYQD…RRYNPAAPLP (344 aa)) is terpene cyclase. 2 residues coordinate Mg(2+): Asp-108 and Asp-112. Substrate contacts are provided by residues Asp-108, Asp-112, 198-201 (RHYD), 246-250 (SWDKE), and 336-337 (RY). The DDXXD motif lies at 108–112 (DDLTD). Residues 345 to 744 (RREDIGKVNG…LHLITFQLKV (400 aa)) form a prenyltransferase region. Positions 399 to 422 (YTTMTPAETSSDDKKKKAKASHET) are disordered. Over residues 409 to 422 (SDDKKKKAKASHET) the composition is skewed to basic and acidic residues. Residues Arg-459 and His-488 each contribute to the isopentenyl diphosphate site. Mg(2+) contacts are provided by Asp-495 and Asp-499. Positions 495–499 (DDVQD) match the DDXXD motif. Arg-504 contacts dimethylallyl diphosphate. Isopentenyl diphosphate is bound at residue Arg-505. Residues Lys-581, Thr-582, and Gln-617 each coordinate dimethylallyl diphosphate.

In the N-terminal section; belongs to the terpene synthase family. This sequence in the C-terminal section; belongs to the FPP/GGPP synthase family. As to quaternary structure, hexamer. Mg(2+) is required as a cofactor.

It catalyses the reaction isopentenyl diphosphate + (2E,6E)-farnesyl diphosphate = (2E,6E,10E)-geranylgeranyl diphosphate + diphosphate. It carries out the reaction (2E,6E,10E)-geranylgeranyl diphosphate = (5R,12R,14S)-dolasta-1(15),8-diene + diphosphate. The catalysed reaction is (2E,6E,10E)-geranylgeranyl diphosphate = delta-araneosene + diphosphate. Its function is as follows. Bifunctional terpene synthase involved in the biosynthesis of the diterpenes delta-araneosene and dolasta-1(15),8-diene. The C-terminal prenyltransferase domain of CgDS catalyzes formation of the universal precursor of diterpene, geranylgeranyl diphosphate (GGPP), whereas the N-terminal terpene cyclase domain catalyzes the cyclization of GGPP to the intermediate delta-araneosene that is further converted to dolasta-1(15),8-diene in a second cyclization event. In some cases the cyclization stops at the delta-araneosene stage. The protein is Dolasta-1(15),8-diene synthase of Colletotrichum gloeosporioides (Anthracnose fungus).